We begin with the raw amino-acid sequence, 152 residues long: UPF0266 membrane protein Ent638_2389 (152 aa).

The next 3 helical transmembrane spans lie at 6–26 (IVLV…EFIM), 45–65 (VDAF…VMSQ), and 67–87 (ALLT…LFWI).

It belongs to the UPF0266 family.

It is found in the cell inner membrane. The protein is UPF0266 membrane protein Ent638_2389 of Enterobacter sp. (strain 638).